The following is a 505-amino-acid chain: Maturase K (505 aa).

This sequence belongs to the intron maturase 2 family. MatK subfamily.

It localises to the plastid. The protein localises to the chloroplast. In terms of biological role, usually encoded in the trnK tRNA gene intron. Probably assists in splicing its own and other chloroplast group II introns. The polypeptide is Maturase K (Apocynum androsaemifolium (Spreading dogbane)).